The primary structure comprises 175 residues: Glutamyl-tRNA(Gln) amidotransferase subunit C, mitochondrial (175 aa).

This sequence belongs to the GatC family. Subunit of the heterotrimeric GatCAB amidotransferase (AdT) complex, composed of A, B and C subunits.

It localises to the mitochondrion. It carries out the reaction L-glutamyl-tRNA(Gln) + L-glutamine + ATP + H2O = L-glutaminyl-tRNA(Gln) + L-glutamate + ADP + phosphate + H(+). In terms of biological role, allows the formation of correctly charged Gln-tRNA(Gln) through the transamidation of misacylated Glu-tRNA(Gln) in the mitochondria. The reaction takes place in the presence of glutamine and ATP through an activated gamma-phospho-Glu-tRNA(Gln). The chain is Glutamyl-tRNA(Gln) amidotransferase subunit C, mitochondrial from Caenorhabditis elegans.